The following is a 2373-amino-acid chain: Highly reducing polyketide synthase (2373 aa).

In terms of domain architecture, Ketosynthase family 3 (KS3) spans 19-446 (QEPIAVVGIA…GSNAHVIVEE (428 aa)). Residues C192, H329, and H369 each act as for beta-ketoacyl synthase activity in the active site. The malonyl-CoA:ACP transacylase (MAT) domain stretch occupies residues 560–874 (IFTGQGAQWP…QYTSAMARGA (315 aa)). Catalysis depends on S652, which acts as the For malonyltransferase activity. The interval 942–1078 (HDLLGSKVLG…GLIRIDEDVP (137 aa)) is N-terminal hotdog fold. A dehydratase (DH) domain region spans residues 942–1241 (HDLLGSKVLG…LSGLRYTRID (300 aa)). A PKS/mFAS DH domain is found at 942 to 1246 (HDLLGSKVLG…YTRIDTGPSV (305 aa)). The Proton acceptor; for dehydratase activity role is filled by H974. Positions 1090–1246 (SHQVDASLWH…YTRIDTGPSV (157 aa)) are C-terminal hotdog fold. D1154 acts as the Proton donor; for dehydratase activity in catalysis. Positions 1669–1985 (GTTDSLIYSE…SANHIGKIVI (317 aa)) are enoyl reductase (ER) domain. The interval 2010-2187 (GYLLIGGLKG…NSVDLGAIQD (178 aa)) is ketoreductase (KR) domain. The 77-residue stretch at 2294–2370 (AIHDAVIDVT…QLAQKIVARL (77 aa)) folds into the Carrier domain. An O-(pantetheine 4'-phosphoryl)serine modification is found at S2330.

The cofactor is pantetheine 4'-phosphate.

The protein operates within mycotoxin biosynthesis. In terms of biological role, highly reducing polyketide synthase; part of the gene cluster that mediates the biosynthesis of brefeldin A (BFA), a protein transport inhibitor that shows antiviral, antifungal, and antitumor properties. The proposed biosynthesis of BFA involves formation of an acyclic polyketide chain that is differentially tailored throughout the backbone. The highly reducing polyketide synthase Bref-PKS is proposed to synthesize the precisely reduced octaketide precursor, which could then be directly offloaded by the thiohydrolase enzyme Bref-TH followed by a cytochrome P450 monooxygenase-mediated formation of the cyclopentane ring and macrocyclization to afford 7-deoxy BFA. Alternatively, the first ring annulation can also occur on the ACP-tethered intermediate before the thiohydrolase release and lactonization. The C7-hydroxylation by another cytochrome P450 monooxygenase is believed to be the final step in the process to obtain the final structure of BFA. In addition to the HRPKS Bref-PKS and the thiohydrolase Bref-TH, the brefeldin A biosynthesis cluster contains 4 cytochrome p450 monooxygenases (called orf3 to orf6), as well a the probable cluster-specific transcription regulator orf8. The polypeptide is Highly reducing polyketide synthase (Eupenicillium brefeldianum (Penicillium brefeldianum)).